We begin with the raw amino-acid sequence, 99 residues long: MALTLTDVKRIAHLARLEMADADAEHMLGQLNELFGLVEQMQAVDTAGIAPLAHPIEQIQEVAQRLREDAVTEVVNRDDNQRPAPAVQDGLYLVPKVIE.

This sequence belongs to the GatC family. In terms of assembly, heterotrimer of A, B and C subunits.

The enzyme catalyses L-glutamyl-tRNA(Gln) + L-glutamine + ATP + H2O = L-glutaminyl-tRNA(Gln) + L-glutamate + ADP + phosphate + H(+). It catalyses the reaction L-aspartyl-tRNA(Asn) + L-glutamine + ATP + H2O = L-asparaginyl-tRNA(Asn) + L-glutamate + ADP + phosphate + 2 H(+). In terms of biological role, allows the formation of correctly charged Asn-tRNA(Asn) or Gln-tRNA(Gln) through the transamidation of misacylated Asp-tRNA(Asn) or Glu-tRNA(Gln) in organisms which lack either or both of asparaginyl-tRNA or glutaminyl-tRNA synthetases. The reaction takes place in the presence of glutamine and ATP through an activated phospho-Asp-tRNA(Asn) or phospho-Glu-tRNA(Gln). The chain is Aspartyl/glutamyl-tRNA(Asn/Gln) amidotransferase subunit C from Burkholderia lata (strain ATCC 17760 / DSM 23089 / LMG 22485 / NCIMB 9086 / R18194 / 383).